Consider the following 208-residue polypeptide: uncharacterized protein (208 aa).

This is an uncharacterized protein from Schizosaccharomyces pombe (strain 972 / ATCC 24843) (Fission yeast).